The chain runs to 470 residues: Neuraminidase (470 aa).

The Intravirion portion of the chain corresponds to 1–6 (MNPNQK). The chain crosses the membrane as a helical span at residues 7–27 (IITIGSISIAIGIISLMLQIG). The interval 11–33 (GSISIAIGIISLMLQIGNIISIW) is involved in apical transport and lipid raft association. Residues 28-470 (NIISIWASHS…GAELPFTIDK (443 aa)) are Virion surface-facing. The hypervariable stalk region stretch occupies residues 36-90 (HSIQTGSQNHTGICNQRIITYENSTWVNHTYVNINNTNVVAGKDKTSVTLAGNSS). N-linked (GlcNAc...) asparagine; by host glycans are attached at residues Asn44, Asn58, Asn63, Asn70, and Asn88. Residues 91-470 (LCSISGWAIY…GAELPFTIDK (380 aa)) are head of neuraminidase. 8 cysteine pairs are disulfide-bonded: Cys92–Cys417, Cys124–Cys129, Cys184–Cys231, Cys233–Cys238, Cys279–Cys292, Cys281–Cys290, Cys318–Cys335, and Cys421–Cys447. Arg118 contacts substrate. Asn146 carries N-linked (GlcNAc...) asparagine; by host glycosylation. Residue Asp151 is the Proton donor/acceptor of the active site. Residue Arg152 participates in substrate binding. N-linked (GlcNAc...) asparagine; by host glycosylation occurs at Asn235. 277–278 (EE) provides a ligand contact to substrate. Arg293 contacts substrate. 3 residues coordinate Ca(2+): Asp294, Gly298, and Asp324. Arg368 lines the substrate pocket. Asn386 carries an N-linked (GlcNAc...) asparagine; by host glycan. Tyr402 (nucleophile) is an active-site residue. N-linked (GlcNAc...) asparagine; by host glycosylation is found at Asn434 and Asn455.

It belongs to the glycosyl hydrolase 34 family. Homotetramer. It depends on Ca(2+) as a cofactor. In terms of processing, N-glycosylated.

The protein resides in the virion membrane. It localises to the host apical cell membrane. It catalyses the reaction Hydrolysis of alpha-(2-&gt;3)-, alpha-(2-&gt;6)-, alpha-(2-&gt;8)- glycosidic linkages of terminal sialic acid residues in oligosaccharides, glycoproteins, glycolipids, colominic acid and synthetic substrates.. With respect to regulation, inhibited by the neuraminidase inhibitors zanamivir (Relenza) and oseltamivir (Tamiflu). These drugs interfere with the release of progeny virus from infected cells and are effective against all influenza strains. Resistance to neuraminidase inhibitors is quite rare. Functionally, catalyzes the removal of terminal sialic acid residues from viral and cellular glycoconjugates. Cleaves off the terminal sialic acids on the glycosylated HA during virus budding to facilitate virus release. Additionally helps virus spread through the circulation by further removing sialic acids from the cell surface. These cleavages prevent self-aggregation and ensure the efficient spread of the progeny virus from cell to cell. Otherwise, infection would be limited to one round of replication. Described as a receptor-destroying enzyme because it cleaves a terminal sialic acid from the cellular receptors. May facilitate viral invasion of the upper airways by cleaving the sialic acid moieties on the mucin of the airway epithelial cells. Likely to plays a role in the budding process through its association with lipid rafts during intracellular transport. May additionally display a raft-association independent effect on budding. Plays a role in the determination of host range restriction on replication and virulence. Sialidase activity in late endosome/lysosome traffic seems to enhance virus replication. This chain is Neuraminidase, found in Influenza A virus (strain A/New Zealand:South Canterbury/35/2000 H1N1).